The chain runs to 252 residues: Probable endonuclease 4 (252 aa).

9 residues coordinate Zn(2+): histidine 56, histidine 96, glutamate 129, aspartate 162, histidine 165, histidine 191, aspartate 204, histidine 206, and glutamate 233.

Belongs to the AP endonuclease 2 family. The cofactor is Zn(2+).

It catalyses the reaction Endonucleolytic cleavage to 5'-phosphooligonucleotide end-products.. Functionally, endonuclease IV plays a role in DNA repair. It cleaves phosphodiester bonds at apurinic or apyrimidinic (AP) sites, generating a 3'-hydroxyl group and a 5'-terminal sugar phosphate. This is Probable endonuclease 4 from Mycobacterium marinum (strain ATCC BAA-535 / M).